A 393-amino-acid chain; its full sequence is MRLLKTHPILGLANSYLIDSPQPSNISYMWNFGSLLGVCLIIQILTGVFLAMHYTPSVDLAFISVEHIMRDVNYGWLIRYLHANTASFFFIFVYLHIGRGLYYGSYKSPRTLLWSIGVIILVLMMAIAFLGYVLPYGQMSLWGATVITNLLSAIPWIGQDFVEFVWGGFSVNNATLNRFFSLHYLLPFVLAALAAMHLLALHEHGSSNPLGVSGNTDRLPFHPYFTFKDLVTIFVFLLALSLFVFYMPNAMGHSDNYIPANPMQTPASIVPEWYLLPFYAILRSIPSKLIGVLAMFMSLLILLGMPILDTSRIRGSQFRPLMRFSFWTFVACFFILMFIGSQHVESPYVEIGAAATAYYFAWFLVVVPAIGIIENTLMDIALTEETSSFHRVV.

The next 4 helical transmembrane spans lie at 32–52, 76–98, 113–133, and 179–199; these read FGSL…FLAM, WLIR…LHIG, LWSI…LGYV, and FFSL…MHLL. Heme b is bound by residues His82 and His96. The heme b site is built by His183 and His197. His202 contributes to the a ubiquinone binding site. The next 4 membrane-spanning stretches (helical) occupy residues 225–245, 289–309, 321–341, and 348–368; these read FTFK…LFVF, LIGV…PILD, LMRF…FIGS, and YVEI…VVVP.

It belongs to the cytochrome b family. In terms of assembly, fungal cytochrome b-c1 complex contains 10 subunits; 3 respiratory subunits, 2 core proteins and 5 low-molecular weight proteins. Cytochrome b-c1 complex is a homodimer. It depends on heme b as a cofactor.

It is found in the mitochondrion inner membrane. Its function is as follows. Component of the ubiquinol-cytochrome c reductase complex (complex III or cytochrome b-c1 complex) that is part of the mitochondrial respiratory chain. The b-c1 complex mediates electron transfer from ubiquinol to cytochrome c. Contributes to the generation of a proton gradient across the mitochondrial membrane that is then used for ATP synthesis. This Mycosarcoma maydis (Corn smut fungus) protein is Cytochrome b (COB).